We begin with the raw amino-acid sequence, 163 residues long: Transcription elongation factor GreA (163 aa).

A coiled-coil region spans residues 49–80 (ENAEYDAARDRQSEVERRILELERILENAEII).

The protein belongs to the GreA/GreB family.

In terms of biological role, necessary for efficient RNA polymerase transcription elongation past template-encoded arresting sites. The arresting sites in DNA have the property of trapping a certain fraction of elongating RNA polymerases that pass through, resulting in locked ternary complexes. Cleavage of the nascent transcript by cleavage factors such as GreA or GreB allows the resumption of elongation from the new 3'terminus. GreA releases sequences of 2 to 3 nucleotides. This chain is Transcription elongation factor GreA, found in Mycoplasmopsis agalactiae (strain NCTC 10123 / CIP 59.7 / PG2) (Mycoplasma agalactiae).